We begin with the raw amino-acid sequence, 253 residues long: 5'-nucleotidase SurE (253 aa).

The a divalent metal cation site is built by D8, D9, S39, and N92.

This sequence belongs to the SurE nucleotidase family. Requires a divalent metal cation as cofactor.

It is found in the cytoplasm. It carries out the reaction a ribonucleoside 5'-phosphate + H2O = a ribonucleoside + phosphate. Functionally, nucleotidase that shows phosphatase activity on nucleoside 5'-monophosphates. The protein is 5'-nucleotidase SurE of Burkholderia vietnamiensis (strain G4 / LMG 22486) (Burkholderia cepacia (strain R1808)).